Consider the following 153-residue polypeptide: 3-hydroxyacyl-[acyl-carrier-protein] dehydratase FabZ (153 aa).

H54 is an active-site residue.

It belongs to the thioester dehydratase family. FabZ subfamily.

It is found in the cytoplasm. It catalyses the reaction a (3R)-hydroxyacyl-[ACP] = a (2E)-enoyl-[ACP] + H2O. Its function is as follows. Involved in unsaturated fatty acids biosynthesis. Catalyzes the dehydration of short chain beta-hydroxyacyl-ACPs and long chain saturated and unsaturated beta-hydroxyacyl-ACPs. This chain is 3-hydroxyacyl-[acyl-carrier-protein] dehydratase FabZ, found in Shewanella amazonensis (strain ATCC BAA-1098 / SB2B).